The primary structure comprises 232 residues: Ethylene-responsive transcription factor ERF025 (232 aa).

Polar residues predominate over residues 1–29; the sequence is MSNNNNSPTTVNQETTTSREVSITLPTDQ. The disordered stretch occupies residues 1 to 63; that stretch reads MSNNNNSPTT…TATGLSGKHS (63 aa). A compositionally biased stretch (low complexity) spans 30–50; that stretch reads SPQTSPGSSSSPSPRPSGGSP. The AP2/ERF DNA-binding region spans 64-120; it reads IFRGIRLRNGKWVSEIREPRKTTRIWLGTYPVPEMAAAAYDVAALALKGPDAVLNFP. The interval 213–232 is disordered; the sequence is PTMEDDSPENHEGDNLWSYK.

Belongs to the AP2/ERF transcription factor family. ERF subfamily.

It is found in the nucleus. Functionally, probably acts as a transcriptional activator. Binds to the GCC-box pathogenesis-related promoter element. May be involved in the regulation of gene expression by stress factors and by components of stress signal transduction pathways. This is Ethylene-responsive transcription factor ERF025 (ERF025) from Arabidopsis thaliana (Mouse-ear cress).